Reading from the N-terminus, the 124-residue chain is Large ribosomal subunit protein bL12 (124 aa).

It belongs to the bacterial ribosomal protein bL12 family. In terms of assembly, homodimer. Part of the ribosomal stalk of the 50S ribosomal subunit. Forms a multimeric L10(L12)X complex, where L10 forms an elongated spine to which 2 to 4 L12 dimers bind in a sequential fashion. Binds GTP-bound translation factors.

Functionally, forms part of the ribosomal stalk which helps the ribosome interact with GTP-bound translation factors. Is thus essential for accurate translation. This is Large ribosomal subunit protein bL12 from Bacteroides fragilis (strain ATCC 25285 / DSM 2151 / CCUG 4856 / JCM 11019 / LMG 10263 / NCTC 9343 / Onslow / VPI 2553 / EN-2).